Consider the following 371-residue polypeptide: MATLGCAPKDDGEGKDEGGSDRGDGDSKPKGKKEVEPHTRREADERAMRIPIPEVLQQRLADDCYYINRRRRLVRLPCQTNVGAILECYVRHFSASVLALGDRRPQPQRAAPERSVGLCREMADGLRITFDHALPLVLLYPQEQAQYEMVTSSTFFFPTEERASDAGRSQEAPWPGPSPPQPSESQAVAGPAAPKRRRAEAEATRAPRRSTRHSTHCHWQAEDRASPQAKRSVPKLFPHLQKTPVHSAAPSPIALTPGKEGSAMFAGFEGTTEEINEILSWKLVPDNYPPGHQPPPPSYIYGAQHLLRLFVKLPEILGKMSFSEKNLKALLKHLDLFLRFLAEYQADFFLESAYVSACEAHYSSKNPRTLC.

Disordered regions lie at residues Met1–Ala47 and Glu160–Lys230. A compositionally biased stretch (basic and acidic residues) spans Pro8–Ala47. The MRG domain maps to Asp44–Pro367. Residues Ser183–Ala193 are compositionally biased toward low complexity. Residues Ala206–His216 show a composition bias toward basic residues.

Its subcellular location is the nucleus. Probable non-catalytic component of the MSL histone acetyltransferase complex, a multiprotein complex that mediates the majority of histone H4 acetylation at 'Lys-16' (H4K16ac), an epigenetic mark that prevents chromatin compaction. This chain is MSL complex subunit 3B, found in Mus musculus (Mouse).